Consider the following 118-residue polypeptide: Large ribosomal subunit protein bL19 (118 aa).

The protein belongs to the bacterial ribosomal protein bL19 family.

In terms of biological role, this protein is located at the 30S-50S ribosomal subunit interface and may play a role in the structure and function of the aminoacyl-tRNA binding site. The protein is Large ribosomal subunit protein bL19 of Dictyoglomus thermophilum (strain ATCC 35947 / DSM 3960 / H-6-12).